Consider the following 139-residue polypeptide: YIRRVRQGSIYSLLVESQQWCKLTLTLLLLLALLTRCTLSETLCGSELVDTLQFVCDDRGFFFVPQHVPPRRGAHRRSRARKGIVEECCFKGCSLRLLEMYCARPSKAERDVARPRQRPHRASQHSRRGSQSRGRGRSR.

The first 38 residues, 1–38 (YIRRVRQGSIYSLLVESQQWCKLTLTLLLLLALLTRCT), serve as a signal peptide directing secretion. The interval 39-67 (LSETLCGSELVDTLQFVCDDRGFFFVPQH) is b. The c stretch occupies residues 68–82 (VPPRRGAHRRSRARK). An a region spans residues 83 to 103 (GIVEECCFKGCSLRLLEMYCA). A d region spans residues 104 to 113 (RPSKAERDVA). A disordered region spans residues 108–139 (AERDVARPRQRPHRASQHSRRGSQSRGRGRSR). The e stretch occupies residues 114-139 (RPRQRPHRASQHSRRGSQSRGRGRSR). A compositionally biased stretch (basic residues) spans 115–139 (PRQRPHRASQHSRRGSQSRGRGRSR).

It belongs to the insulin family.

The protein localises to the secreted. Functionally, the insulin-like growth factors, isolated from plasma, are structurally and functionally related to insulin but have a much higher growth-promoting activity. The protein is Insulin-like growth factor of Myxine glutinosa (Atlantic hagfish).